The following is a 396-amino-acid chain: Phosphoglycerate kinase (396 aa).

Substrate is bound by residues 23–25, R38, 61–64, R122, and R155; these read DFN and HMGK. ATP is bound by residues K206, G296, E327, and 353 to 356; that span reads GGDS.

This sequence belongs to the phosphoglycerate kinase family. As to quaternary structure, monomer.

It is found in the cytoplasm. The enzyme catalyses (2R)-3-phosphoglycerate + ATP = (2R)-3-phospho-glyceroyl phosphate + ADP. It functions in the pathway carbohydrate degradation; glycolysis; pyruvate from D-glyceraldehyde 3-phosphate: step 2/5. This is Phosphoglycerate kinase from Clostridium botulinum (strain Alaska E43 / Type E3).